The sequence spans 501 residues: NAD(P)H-quinone oxidoreductase chain 4, chloroplastic (501 aa).

14 helical membrane passes run 5 to 25, 38 to 58, 85 to 105, 112 to 130, 135 to 155, 168 to 188, 209 to 229, 243 to 263, 275 to 295, 306 to 326, 331 to 351, 387 to 407, 417 to 437, and 463 to 483; these read FPWLTIIVLLPIFAGSLIFFL, ICICSLELLLTTYTFCYHFQL, GLSIGPILLTGFITTLATLAA, SRLFHFLMLAMYSGQIGSF, LLLFFIMWELELIPVYLLLAM, FILYTAGGSIFLLIGVLGIGL, ALEIILYIGFLIAFSVKLPII, HYSTCMLLAGILLKMGAYGLV, SIFSPWLIIVGAIQIIYAALT, IAYSSVSHMGFIIIGIGSITD, GAILQIISHGFIGAALFFLAG, LALPGMSGFLAELIVFFGIIT, ILITFVMAIGMILTPIYLLSM, and LFVSISILLPIIAIGIYPDFV.

It belongs to the complex I subunit 4 family.

Its subcellular location is the plastid. The protein localises to the chloroplast thylakoid membrane. The enzyme catalyses a plastoquinone + NADH + (n+1) H(+)(in) = a plastoquinol + NAD(+) + n H(+)(out). It catalyses the reaction a plastoquinone + NADPH + (n+1) H(+)(in) = a plastoquinol + NADP(+) + n H(+)(out). The sequence is that of NAD(P)H-quinone oxidoreductase chain 4, chloroplastic from Eucalyptus globulus subsp. globulus (Tasmanian blue gum).